Reading from the N-terminus, the 374-residue chain is Flap endonuclease 1 (374 aa).

The segment at Met-1–Arg-105 is N-domain. Asp-34 contributes to the Mg(2+) binding site. Residues Arg-47 and Arg-71 each coordinate DNA. A Mg(2+)-binding site is contributed by Asp-87. Positions Gly-103–Glu-122 are disordered. The I-domain stretch occupies residues Lys-123–His-254. Mg(2+) is bound by residues Glu-159, Glu-161, Asp-180, and Asp-182. Glu-159 is a binding site for DNA. DNA contacts are provided by Gly-232 and Asp-234. Asp-234 serves as a coordination point for Mg(2+). The segment at Ser-335–Lys-374 is disordered. An interaction with PCNA region spans residues Gln-340–Phe-348.

Belongs to the XPG/RAD2 endonuclease family. FEN1 subfamily. As to quaternary structure, interacts with PCNA. Three molecules of FEN1 bind to one PCNA trimer with each molecule binding to one PCNA monomer. PCNA stimulates the nuclease activity without altering cleavage specificity. Requires Mg(2+) as cofactor. Post-translationally, phosphorylated. Phosphorylation upon DNA damage induces relocalization to the nuclear plasma.

It localises to the nucleus. Its subcellular location is the nucleolus. The protein resides in the nucleoplasm. It is found in the mitochondrion. In terms of biological role, structure-specific nuclease with 5'-flap endonuclease and 5'-3' exonuclease activities involved in DNA replication and repair. During DNA replication, cleaves the 5'-overhanging flap structure that is generated by displacement synthesis when DNA polymerase encounters the 5'-end of a downstream Okazaki fragment. It enters the flap from the 5'-end and then tracks to cleave the flap base, leaving a nick for ligation. Also involved in the long patch base excision repair (LP-BER) pathway, by cleaving within the apurinic/apyrimidinic (AP) site-terminated flap. Acts as a genome stabilization factor that prevents flaps from equilibrating into structures that lead to duplications and deletions. Also possesses 5'-3' exonuclease activity on nicked or gapped double-stranded DNA, and exhibits RNase H activity. Also involved in replication and repair of rDNA and in repairing mitochondrial DNA. The protein is Flap endonuclease 1 of Mycosarcoma maydis (Corn smut fungus).